A 400-amino-acid chain; its full sequence is Elongation factor Tu 2 (400 aa).

One can recognise a tr-type G domain in the interval 10 to 209 (KPHVNIGTIG…AVDEYIPTPQ (200 aa)). Positions 19–26 (GHVDHGKT) are G1. 19–26 (GHVDHGKT) serves as a coordination point for GTP. Residue T26 participates in Mg(2+) binding. The interval 60-64 (GITIN) is G2. The G3 stretch occupies residues 81 to 84 (DCPG). Residues 81 to 85 (DCPGH) and 136 to 139 (NKAD) each bind GTP. The segment at 136-139 (NKAD) is G4. A G5 region spans residues 174-176 (SAL).

The protein belongs to the TRAFAC class translation factor GTPase superfamily. Classic translation factor GTPase family. EF-Tu/EF-1A subfamily. Monomer.

The protein resides in the cytoplasm. The catalysed reaction is GTP + H2O = GDP + phosphate + H(+). GTP hydrolase that promotes the GTP-dependent binding of aminoacyl-tRNA to the A-site of ribosomes during protein biosynthesis. The protein is Elongation factor Tu 2 of Pelotomaculum thermopropionicum (strain DSM 13744 / JCM 10971 / SI).